A 436-amino-acid chain; its full sequence is Trigger factor (436 aa).

Disordered regions lie at residues 1-26 (MQVS…RVEN) and 81-100 (QESL…TGEG). Residues 161–246 (EDRVVIDFHG…VKRVEEPQLP (86 aa)) form the PPIase FKBP-type domain.

It belongs to the FKBP-type PPIase family. Tig subfamily.

Its subcellular location is the cytoplasm. The enzyme catalyses [protein]-peptidylproline (omega=180) = [protein]-peptidylproline (omega=0). Functionally, involved in protein export. Acts as a chaperone by maintaining the newly synthesized protein in an open conformation. Functions as a peptidyl-prolyl cis-trans isomerase. This is Trigger factor from Halorhodospira halophila (strain DSM 244 / SL1) (Ectothiorhodospira halophila (strain DSM 244 / SL1)).